The sequence spans 845 residues: Meiotically up-regulated gene 4 protein (845 aa).

The segment at 122 to 158 (LSTTDEQPKEPSIISISSSSSDPSSSPPPSSSLLKTP) is disordered. Residues 132–145 (PSIISISSSSSDPS) show a composition bias toward low complexity. A helical membrane pass occupies residues 726–746 (FLVFLTFTGMTLFILYQLTFP).

The protein localises to the membrane. In terms of biological role, has a role in meiosis. This Schizosaccharomyces pombe (strain 972 / ATCC 24843) (Fission yeast) protein is Meiotically up-regulated gene 4 protein (mug4).